A 271-amino-acid polypeptide reads, in one-letter code: Formamidopyrimidine-DNA glycosylase (271 aa).

P2 serves as the catalytic Schiff-base intermediate with DNA. Catalysis depends on E3, which acts as the Proton donor. K57 acts as the Proton donor; for beta-elimination activity in catalysis. Residues H90, R109, and K151 each contribute to the DNA site. Residues 236 to 270 (HVYGRGGETCTQCGNLLSEIKLGQRATVFCGLCQP) form an FPG-type zinc finger. R260 (proton donor; for delta-elimination activity) is an active-site residue.

It belongs to the FPG family. Monomer. Requires Zn(2+) as cofactor.

It catalyses the reaction Hydrolysis of DNA containing ring-opened 7-methylguanine residues, releasing 2,6-diamino-4-hydroxy-5-(N-methyl)formamidopyrimidine.. The catalysed reaction is 2'-deoxyribonucleotide-(2'-deoxyribose 5'-phosphate)-2'-deoxyribonucleotide-DNA = a 3'-end 2'-deoxyribonucleotide-(2,3-dehydro-2,3-deoxyribose 5'-phosphate)-DNA + a 5'-end 5'-phospho-2'-deoxyribonucleoside-DNA + H(+). In terms of biological role, involved in base excision repair of DNA damaged by oxidation or by mutagenic agents. Acts as a DNA glycosylase that recognizes and removes damaged bases. Has a preference for oxidized purines, such as 7,8-dihydro-8-oxoguanine (8-oxoG). Has AP (apurinic/apyrimidinic) lyase activity and introduces nicks in the DNA strand. Cleaves the DNA backbone by beta-delta elimination to generate a single-strand break at the site of the removed base with both 3'- and 5'-phosphates. In Shewanella loihica (strain ATCC BAA-1088 / PV-4), this protein is Formamidopyrimidine-DNA glycosylase.